Here is a 388-residue protein sequence, read N- to C-terminus: Leucine aminopeptidase 1 (388 aa).

The first 19 residues, 1-19 (MRVLAAIALGATGLRGALA), serve as a signal peptide directing secretion. Residues 20–88 (AVVPQEVLGT…YPTLNSASYV (69 aa)) constitute a propeptide that is removed on maturation. N-linked (GlcNAc...) asparagine glycans are attached at residues Asn-106 and Asn-180. His-188 and Asp-207 together coordinate Zn(2+). N-linked (GlcNAc...) asparagine glycosylation occurs at Asn-232. Residues Glu-246 and Asp-273 each contribute to the Zn(2+) site. Cysteines 322 and 326 form a disulfide. Residue His-355 coordinates Zn(2+).

It belongs to the peptidase M28 family. M28E subfamily. Monomer. Zn(2+) is required as a cofactor.

The protein resides in the secreted. In terms of biological role, extracellular aminopeptidase that allows assimilation of proteinaceous substrates. The polypeptide is Leucine aminopeptidase 1 (lap1) (Aspergillus clavatus (strain ATCC 1007 / CBS 513.65 / DSM 816 / NCTC 3887 / NRRL 1 / QM 1276 / 107)).